Here is a 274-residue protein sequence, read N- to C-terminus: Large ribosomal subunit protein uL2 (274 aa).

2 disordered regions span residues 28 to 54 (APHA…TRHI) and 224 to 274 (VAMN…RRRK). The span at 263 to 274 (KRTDKMIVRRRK) shows a compositional bias: basic and acidic residues.

Belongs to the universal ribosomal protein uL2 family. Part of the 50S ribosomal subunit. Forms a bridge to the 30S subunit in the 70S ribosome.

Its function is as follows. One of the primary rRNA binding proteins. Required for association of the 30S and 50S subunits to form the 70S ribosome, for tRNA binding and peptide bond formation. It has been suggested to have peptidyltransferase activity; this is somewhat controversial. Makes several contacts with the 16S rRNA in the 70S ribosome. The sequence is that of Large ribosomal subunit protein uL2 from Pseudomonas syringae pv. tomato (strain ATCC BAA-871 / DC3000).